Consider the following 1483-residue polypeptide: MQRSPLEKASVISKLFFSWTRPILRKGYRQRLELSDIYQIPSTDSADNLSEKLEREWDRELASKKNPKLINALRRCFFWKFMFYGILLYLGEVTKAVQPLLLGRIIASYDPDNKVERSIAIYLGIGLCLLFVVRTLLLHPAIFGLHHIGMQMRIAMFSLIYKKTLKLSSRVLDKISIGQLISLLSNNLNKFDEGLALAHFVWIVPLQVTLLMGLLWELLQASAFCGLAFLIIVAFYQAGLGRMMMKYRDKRGGKINERLVITSEMIENIQSVKAYCWEEAMEKMIENLRQTELKLTRKAAYVRYCNSSAFFFSGFFVVFLSVLPYALMKGIILRKIFTTISFCIVLRMAVTRQFPWAVQTWYDSLGAINKIQDFLQKQEYKTLEYNLTTTEVVMENATAYWEEGFGGLFEKAKQNNNNRKISNGDNSLFFSNFSLLGTPVLKDINFKIERGQLLAVAGSTGAGKTSLLMMIMGELEPSAGKIKHSGRISFCSQFSWIMPGTIKENIIFGVSYDEYRYRSVIKACQLEEDISKFTEKDNIVLGEGGITLSGGQRARISLARAVYKDADLYLLDSPFGYLDVLTEKEIFESCVCKLMANKTRILVTSKMEHLKKADKILILHEGSTYFYGTFSELQNLRPDFSSKLMGYDSFDQFSAERRNSILTETLRRFSLEGDGAVSWNETRKQSFKQTGEFGEKRKNSILNSMNSARKFSIVQKTTLQMNGIEANSEEPLERRLSLVPDSELGETILPRSNVINTGPTLQGRRRQSVLNLMTGSSGNQGQGIHRKAAASTRKMSLAPSTNFTEMDIYSRRLSQDSGLEISEEINEEDLKECFFDDVENIPAVTTWNTYLRYITIHKSLIFVLIWCLIIFLAEVAVSLVFLLLFEKSPRQDTGNVTKSSNNSSYGVIITNTSSYYIIYIYVGVADTLLALGLLRGLPLVHTLITASKILHHKMLHSVLQAPMSTLNTLKAGGILNRFSKDIAILDDLLPLTIFDFIQLILIVIGAVIVVSVLEPYIFLATVPVIIAFVMLRAYFLHTSQQLKQLESEGRSPIFTHLVTSLKGLWTLRAFGRQPYFETLFHKALNLHTANWFLYLSTLRWFQMRIEMIFVIFFIAVTFISILTTGDGEGRVGIILTLAMNIMNTLQWAVNSSIDVDSLMRSVSRVFKFIDMPTEEIKPSKPVKPSKEGPLSKVMIIENEHVKKDDIWPSGGQMTVKDLTAKYIESGNAILENISFSISPGQRVGLLGRTGSGKSTLLSAFLRLLNTEGEIQIDGVSWDSITLQQWRKAFGVIPQKVFIFSGTFRKNLDPYEQWNDQEIWKVADEVGLRSVIEQFPGKLDFVLVDGGYVLSHGHKQLMCLARSVLSKAKILLLDEPSAHLDPITYQIIRRTIKQAFADCTVILCEHRIEAMLECQRFLVIEENKVRQYDSIQKLLSEKSLFRQAISNSDRLKLFPHRNSSKHKSRSKIAALKEETEEEVQETRL.

Over 1–77 the chain is Cytoplasmic; sequence MQRSPLEKAS…KLINALRRCF (77 aa). The helical transmembrane segment at 78–98 threads the bilayer; it reads FWKFMFYGILLYLGEVTKAVQ. Positions 81 to 365 constitute an ABC transmembrane type-1 1 domain; the sequence is FMFYGILLYL…WAVQTWYDSL (285 aa). Residues 99–122 lie on the Extracellular side of the membrane; the sequence is PLLLGRIIASYDPDNKVERSIAIY. A helical transmembrane segment spans residues 123-146; it reads LGIGLCLLFVVRTLLLHPAIFGLH. The Cytoplasmic segment spans residues 147 to 195; sequence HIGMQMRIAMFSLIYKKTLKLSSRVLDKISIGQLISLLSNNLNKFDEGL. The chain crosses the membrane as a helical span at residues 196-216; that stretch reads ALAHFVWIVPLQVTLLMGLLW. Topologically, residues 217-222 are extracellular; it reads ELLQAS. A helical membrane pass occupies residues 223-243; that stretch reads AFCGLAFLIIVAFYQAGLGRM. The Cytoplasmic portion of the chain corresponds to 244–298; the sequence is MMKYRDKRGGKINERLVITSEMIENIQSVKAYCWEEAMEKMIENLRQTELKLTRK. Residues 299 to 319 traverse the membrane as a helical segment; the sequence is AAYVRYCNSSAFFFSGFFVVF. The Extracellular segment spans residues 320–339; the sequence is LSVLPYALMKGIILRKIFTT. A helical membrane pass occupies residues 340-358; that stretch reads ISFCIVLRMAVTRQFPWAV. Residues 359–859 are Cytoplasmic-facing; the sequence is QTWYDSLGAI…YLRYITIHKS (501 aa). Residues tryptophan 401, serine 434, 458 to 465, and glutamine 493 contribute to the ATP site; that span reads GSTGAGKT. Residues 423–646 enclose the ABC transporter 1 domain; that stretch reads NGDNSLFFSN…RPDFSSKLMG (224 aa). Cysteine 524 is lipidated: S-palmitoyl cysteine. Phosphoserine occurs at positions 549 and 660. The segment at 654-832 is disordered R region; the sequence is SAERRNSILT…EEINEEDLKE (179 aa). Phosphoserine; by PKA is present on serine 670. Serine 686 is subject to Phosphoserine. Residue lysine 688 forms a Glycyl lysine isopeptide (Lys-Gly) (interchain with G-Cter in ubiquitin) linkage. Phosphoserine occurs at positions 700 and 712. Threonine 717 carries the post-translational modification Phosphothreonine. Serine 737, serine 768, serine 791, serine 796, and serine 814 each carry phosphoserine. The chain crosses the membrane as a helical span at residues 860–880; that stretch reads LIFVLIWCLIIFLAEVAVSLV. The 298-residue stretch at 860 to 1157 folds into the ABC transmembrane type-1 2 domain; sequence LIFVLIWCLI…AVNSSIDVDS (298 aa). Residues 881 to 920 are Extracellular-facing; it reads FLLLFEKSPRQDTGNVTKSSNNSSYGVIITNTSSYYIIYI. N-linked (GlcNAc...) asparagine glycans are attached at residues asparagine 895, asparagine 901, asparagine 902, and asparagine 911. Residues 921-941 form a discontinuously helical membrane-spanning segment; it reads YVGVADTLLALGLLRGLPLVH. At 942 to 992 the chain is on the cytoplasmic side; sequence TLITASKILHHKMLHSVLQAPMSTLNTLKAGGILNRFSKDIAILDDLLPLT. A helical transmembrane segment spans residues 993–1013; the sequence is IFDFIQLILIVIGAVIVVSVL. At 1014–1015 the chain is on the extracellular side; sequence EP. Residues 1016–1036 form a helical membrane-spanning segment; that stretch reads YIFLATVPVIIAFVMLRAYFL. The Cytoplasmic portion of the chain corresponds to 1037–1097; that stretch reads HTSQQLKQLE…TANWFLYLST (61 aa). The chain crosses the membrane as a helical span at residues 1098 to 1118; the sequence is LRWFQMRIEMIFVIFFIAVTF. Topologically, residues 1119 to 1132 are extracellular; it reads ISILTTGDGEGRVG. A helical transmembrane segment spans residues 1133 to 1153; the sequence is IILTLAMNIMNTLQWAVNSSI. Residues 1154–1483 lie on the Cytoplasmic side of the membrane; the sequence is DVDSLMRSVS…TEEEVQETRL (330 aa). Positions 1213 to 1446 constitute an ABC transporter 2 domain; sequence MTVKDLTAKY…KSLFRQAISN (234 aa). Residues tyrosine 1222 and 1247–1254 each bind ATP; that span reads GRTGSGKS. Positions 1389–1483 are interaction with GORASP2; that stretch reads RTIKQAFADC…TEEEVQETRL (95 aa). Cysteine 1398 carries S-palmitoyl cysteine lipidation. Serine 1447 and serine 1459 each carry phosphoserine. Residues 1455–1465 show a composition bias toward basic residues; it reads HRNSSKHKSRS. Residues 1455 to 1483 are disordered; the sequence is HRNSSKHKSRSKIAALKEETEEEVQETRL. Residues 1473-1483 are compositionally biased toward acidic residues; it reads ETEEEVQETRL. A PDZ-binding motif is present at residues 1481-1483; sequence TRL.

It belongs to the ABC transporter superfamily. ABCC family. CFTR transporter (TC 3.A.1.202) subfamily. As to quaternary structure, monomer; does not require oligomerization for channel activity. May form oligomers in the membrane. Interacts with SLC26A3, SLC26A6 and NHERF1. Interacts with SHANK2. Interacts with MYO6. Interacts (via C-terminus) with GOPC (via PDZ domain); this promotes CFTR internalization and thereby decreases channel activity. Interacts with SLC4A7 through NHERF1. Found in a complex with MYO5B and RAB11A. Interacts with ANO1. Interacts with SLC26A8. Interacts with AHCYL1; the interaction increases CFTR activity. Interacts with CSE1L. The core-glycosylated form interacts with GORASP2 (via PDZ GRASP-type 1 domain) in respone to ER stress. Interacts with MARCHF2; the interaction leads to CFTR ubiqtuitination and degradation. Interacts with ADGRG2. N-glycosylated. In terms of processing, phosphorylated; cAMP treatment promotes phosphorylation and activates the channel. Dephosphorylation decreases the ATPase activity (in vitro). Phosphorylation at PKA sites activates the channel. Phosphorylation at PKC sites enhances the response to phosphorylation by PKA. Phosphorylated by AMPK; this inhibits channel activity. Post-translationally, ubiquitinated, leading to its degradation in the lysosome. Deubiquitination by USP10 in early endosomes enhances its endocytic recycling to the cell membrane. Ubiquitinated by RNF185 during ER stress. Ubiquitinated by MARCHF2.

The protein resides in the apical cell membrane. It localises to the early endosome membrane. The protein localises to the cell membrane. Its subcellular location is the recycling endosome membrane. It is found in the endoplasmic reticulum membrane. The protein resides in the nucleus. The catalysed reaction is ATP + H2O + closed Cl(-) channel = ADP + phosphate + open Cl(-) channel.. It catalyses the reaction chloride(in) = chloride(out). The enzyme catalyses hydrogencarbonate(in) = hydrogencarbonate(out). It carries out the reaction ATP + H2O = ADP + phosphate + H(+). Its function is as follows. Epithelial ion channel that plays an important role in the regulation of epithelial ion and water transport and fluid homeostasis. Mediates the transport of chloride ions across the cell membrane. The ion channel is also permeable to HCO(3)(-); selectivity depends on the extracellular chloride concentration. Exerts its function also by modulating the activity of other ion channels and transporters. Contributes to the regulation of the pH and the ion content of the epithelial fluid layer. Modulates the activity of the epithelial sodium channel (ENaC) complex, in part by regulating the cell surface expression of the ENaC complex. May regulate bicarbonate secretion and salvage in epithelial cells by regulating the transporter SLC4A7. Can inhibit the chloride channel activity of ANO1. Plays a role in the chloride and bicarbonate homeostasis during sperm epididymal maturation and capacitation. The protein is Cystic fibrosis transmembrane conductance regulator of Atelerix albiventris (Middle-African hedgehog).